The primary structure comprises 325 residues: ATPase ASNA1 homolog 2 (325 aa).

22 to 29 (KGGVGKTT) is an ATP binding site. Asp-51 is an active-site residue. Glu-231 and Asn-258 together coordinate ATP. 2 residues coordinate Zn(2+): Cys-267 and Cys-270.

This sequence belongs to the arsA ATPase family. In terms of assembly, homodimer.

It localises to the cytoplasm. The protein resides in the endoplasmic reticulum. Functionally, ATPase required for the post-translational delivery of tail-anchored (TA) proteins to the endoplasmic reticulum. Recognizes and selectively binds the transmembrane domain of TA proteins in the cytosol. This complex then targets to the endoplasmic reticulum by membrane-bound receptors, where the tail-anchored protein is released for insertion. This process is regulated by ATP binding and hydrolysis. ATP binding drives the homodimer towards the closed dimer state, facilitating recognition of newly synthesized TA membrane proteins. ATP hydrolysis is required for insertion. Subsequently, the homodimer reverts towards the open dimer state, lowering its affinity for the membrane-bound receptor, and returning it to the cytosol to initiate a new round of targeting. In Paramecium tetraurelia, this protein is ATPase ASNA1 homolog 2.